The primary structure comprises 263 residues: Formamidopyrimidine-DNA glycosylase (263 aa).

Pro2 acts as the Schiff-base intermediate with DNA in catalysis. Glu3 acts as the Proton donor in catalysis. The active-site Proton donor; for beta-elimination activity is Lys59. Residues His93 and Arg111 each coordinate DNA. Residues 229-263 (KVYGKNGSLCVRCNNVLIRERHAGRSTHYCPHCQK) form an FPG-type zinc finger. Catalysis depends on Arg253, which acts as the Proton donor; for delta-elimination activity.

It belongs to the FPG family. Monomer. Requires Zn(2+) as cofactor.

The catalysed reaction is Hydrolysis of DNA containing ring-opened 7-methylguanine residues, releasing 2,6-diamino-4-hydroxy-5-(N-methyl)formamidopyrimidine.. It catalyses the reaction 2'-deoxyribonucleotide-(2'-deoxyribose 5'-phosphate)-2'-deoxyribonucleotide-DNA = a 3'-end 2'-deoxyribonucleotide-(2,3-dehydro-2,3-deoxyribose 5'-phosphate)-DNA + a 5'-end 5'-phospho-2'-deoxyribonucleoside-DNA + H(+). Involved in base excision repair of DNA damaged by oxidation or by mutagenic agents. Acts as a DNA glycosylase that recognizes and removes damaged bases. Has a preference for oxidized purines, such as 7,8-dihydro-8-oxoguanine (8-oxoG). Has AP (apurinic/apyrimidinic) lyase activity and introduces nicks in the DNA strand. Cleaves the DNA backbone by beta-delta elimination to generate a single-strand break at the site of the removed base with both 3'- and 5'-phosphates. The sequence is that of Formamidopyrimidine-DNA glycosylase from Carboxydothermus hydrogenoformans (strain ATCC BAA-161 / DSM 6008 / Z-2901).